Reading from the N-terminus, the 196-residue chain is ATP-dependent Clp protease proteolytic subunit (196 aa).

The active-site Nucleophile is S101. The active site involves H126.

It belongs to the peptidase S14 family. As to quaternary structure, component of the chloroplastic Clp protease core complex.

It localises to the plastid. The protein resides in the chloroplast stroma. The catalysed reaction is Hydrolysis of proteins to small peptides in the presence of ATP and magnesium. alpha-casein is the usual test substrate. In the absence of ATP, only oligopeptides shorter than five residues are hydrolyzed (such as succinyl-Leu-Tyr-|-NHMec, and Leu-Tyr-Leu-|-Tyr-Trp, in which cleavage of the -Tyr-|-Leu- and -Tyr-|-Trp bonds also occurs).. Functionally, cleaves peptides in various proteins in a process that requires ATP hydrolysis. Has a chymotrypsin-like activity. Plays a major role in the degradation of misfolded proteins. The protein is ATP-dependent Clp protease proteolytic subunit of Helianthus annuus (Common sunflower).